A 251-amino-acid chain; its full sequence is Transmembrane ascorbate-dependent reductase CYB561 (251 aa).

Position 1 is an N-acetylmethionine (M1). Topologically, residues 1–16 (MEGGAAASTPAALPYY) are cytoplasmic. A helical transmembrane segment spans residues 17–37 (VAFSQLLGLTLVAMTGAWLGL). Positions 19–220 (FSQLLGLTLV…FGGAVLYILT (202 aa)) constitute a Cytochrome b561 domain. Over 38-51 (YRGGIAWESDLQFN) the chain is Vesicular. Residues 52–72 (AHPLCMVIGLIFLQGDALLVY) form a helical membrane-spanning segment. Heme b-binding residues include H53, R73, and K80. The Cytoplasmic portion of the chain corresponds to 73-85 (RVFRNEAKRTTKV). L-ascorbate-binding residues include K80 and K84. A helical transmembrane segment spans residues 86-106 (LHGLLHIFALVIALVGLVAVF). Heme b is bound by residues H87, 116–119 (DLYS), and H121. Residues 107–124 (DYHRKEGYADLYSLHSWC) lie on the Vesicular side of the membrane. The helical transmembrane segment at 125–145 (GILVFVLYFVQWLVGFSFFLF) threads the bilayer. At 146-158 (PGASFSLRSRYRP) the chain is on the cytoplasmic side. R153 contributes to the L-ascorbate binding site. Residues 159 to 179 (QHIFFGATIFLLSVGTALLGL) form a helical membrane-spanning segment. H160 and E181 together coordinate heme b. At 180–198 (KEALLFKLRDKYSAFEPEG) the chain is on the vesicular side. Residues 199-219 (VLANVLGLLLACFGGAVLYIL) form a helical membrane-spanning segment. Residues 220 to 251 (TRADWKRPSQAEEQALSMDFKTLTEGDSPGSQ) lie on the Cytoplasmic side of the membrane. K225 is a binding site for heme b. Position 247 is a phosphoserine (S247).

The cofactor is heme b.

It is found in the cytoplasmic vesicle. The protein localises to the secretory vesicle. It localises to the chromaffin granule membrane. The enzyme catalyses monodehydro-L-ascorbate radical(out) + L-ascorbate(in) = monodehydro-L-ascorbate radical(in) + L-ascorbate(out). Transmembrane reductase that uses ascorbate as an electron donor in the cytoplasm and transfers electrons across membranes to reduce monodehydro-L-ascorbate radical in the lumen of secretory vesicles. It is therefore involved the regeneration and homeostasis within secretory vesicles of ascorbate which in turn provides reducing equivalents needed to support the activity of intravesicular enzymes. In Pongo abelii (Sumatran orangutan), this protein is Transmembrane ascorbate-dependent reductase CYB561 (CYB561).